The following is a 219-amino-acid chain: Proteasome subunit beta (219 aa).

The propeptide at 1–14 (MISGSEYHKEYMKG) is removed in mature form; by autocatalysis. Thr-15 (nucleophile) is an active-site residue.

It belongs to the peptidase T1B family. As to quaternary structure, the 20S proteasome core is composed of 14 alpha and 14 beta subunits that assemble into four stacked heptameric rings, resulting in a barrel-shaped structure. The two inner rings, each composed of seven catalytic beta subunits, are sandwiched by two outer rings, each composed of seven alpha subunits. The catalytic chamber with the active sites is on the inside of the barrel. Has a gated structure, the ends of the cylinder being occluded by the N-termini of the alpha-subunits. Is capped at one or both ends by the proteasome regulatory ATPase, PAN.

It localises to the cytoplasm. The enzyme catalyses Cleavage of peptide bonds with very broad specificity.. Its activity is regulated as follows. The formation of the proteasomal ATPase PAN-20S proteasome complex, via the docking of the C-termini of PAN into the intersubunit pockets in the alpha-rings, triggers opening of the gate for substrate entry. Interconversion between the open-gate and close-gate conformations leads to a dynamic regulation of the 20S proteasome proteolysis activity. In terms of biological role, component of the proteasome core, a large protease complex with broad specificity involved in protein degradation. In Methanococcus vannielii (strain ATCC 35089 / DSM 1224 / JCM 13029 / OCM 148 / SB), this protein is Proteasome subunit beta.